We begin with the raw amino-acid sequence, 359 residues long: Phospho-N-acetylmuramoyl-pentapeptide-transferase (359 aa).

Helical transmembrane passes span 3-23 (QILI…PVLI), 55-75 (VAIL…GLAL), 84-104 (GLLV…DDLI), 120-140 (TVGI…FGNA), 156-176 (IATV…LVSA), 187-207 (LDGL…LITF), 231-251 (LALV…WNAA), 255-275 (IFMG…LSVT), 280-300 (ILAV…VVQI), and 334-354 (FWLL…GEWL).

This sequence belongs to the glycosyltransferase 4 family. MraY subfamily. It depends on Mg(2+) as a cofactor.

The protein resides in the cell membrane. It carries out the reaction UDP-N-acetyl-alpha-D-muramoyl-L-alanyl-gamma-D-glutamyl-meso-2,6-diaminopimeloyl-D-alanyl-D-alanine + di-trans,octa-cis-undecaprenyl phosphate = di-trans,octa-cis-undecaprenyl diphospho-N-acetyl-alpha-D-muramoyl-L-alanyl-D-glutamyl-meso-2,6-diaminopimeloyl-D-alanyl-D-alanine + UMP. It participates in cell wall biogenesis; peptidoglycan biosynthesis. Its function is as follows. Catalyzes the initial step of the lipid cycle reactions in the biosynthesis of the cell wall peptidoglycan: transfers peptidoglycan precursor phospho-MurNAc-pentapeptide from UDP-MurNAc-pentapeptide onto the lipid carrier undecaprenyl phosphate, yielding undecaprenyl-pyrophosphoryl-MurNAc-pentapeptide, known as lipid I. The chain is Phospho-N-acetylmuramoyl-pentapeptide-transferase from Mycobacterium sp. (strain JLS).